The following is a 257-amino-acid chain: Type III pantothenate kinase (257 aa).

6 to 13 (DVGNTSTK) provides a ligand contact to ATP. 109 to 112 (GADR) provides a ligand contact to substrate. The Proton acceptor role is filled by D111. K(+) is bound at residue D132. T135 lines the ATP pocket. T187 lines the substrate pocket.

It belongs to the type III pantothenate kinase family. Homodimer. Requires NH4(+) as cofactor. K(+) is required as a cofactor.

It localises to the cytoplasm. The enzyme catalyses (R)-pantothenate + ATP = (R)-4'-phosphopantothenate + ADP + H(+). It participates in cofactor biosynthesis; coenzyme A biosynthesis; CoA from (R)-pantothenate: step 1/5. In terms of biological role, catalyzes the phosphorylation of pantothenate (Pan), the first step in CoA biosynthesis. In Anaplasma marginale (strain Florida), this protein is Type III pantothenate kinase.